Consider the following 331-residue polypeptide: XylDLEGF operon transcriptional activator 1 (331 aa).

Residues 214–315 (ERVVQFIEEN…GELPSDTLRR (102 aa)) form the HTH araC/xylS-type domain. DNA-binding regions (H-T-H motif) lie at residues 231–252 (ERLAELALMSPRSLYTLFEKHA) and 282–305 (VTEMALDYGFFHTGRFAENYRSTF).

The protein localises to the cytoplasm. Regulatory protein of the TOL plasmid xyl operons. XylS activates the xylXYZLTEGFJQKIH operon required for the degradation of toluene, m-xylene and p-xylene. The chain is XylDLEGF operon transcriptional activator 1 (xylS1) from Pseudomonas putida (Arthrobacter siderocapsulatus).